Consider the following 195-residue polypeptide: Probable GTP-binding protein EngB (195 aa).

Positions 24 to 195 constitute an EngB-type G domain; it reads ELPEIALAGR…EAWDAILEKL (172 aa). GTP-binding positions include 32–39, 59–63, 77–80, 144–147, and 176–178; these read GRSNVGKS, GKTQL, DVPG, TKAD, and FSS. Mg(2+) is bound by residues S39 and T61.

It belongs to the TRAFAC class TrmE-Era-EngA-EngB-Septin-like GTPase superfamily. EngB GTPase family. Mg(2+) is required as a cofactor.

Necessary for normal cell division and for the maintenance of normal septation. The sequence is that of Probable GTP-binding protein EngB from Streptococcus pneumoniae (strain ATCC 700669 / Spain 23F-1).